Reading from the N-terminus, the 511-residue chain is MVVGILIGIIILGVVGFIQYTLIEKASKNRVESLEKEASLALEEAKREAESTKKEAILEAKEEVHKLRSDLDKEIRDRRNEIQRFERRLIQREESLDKKGEMLEKREDSINKKSIEIQELEERVQSLYGEQRAELERISNLSSEDARTLLLDEVRREIKHESAMLIKELETKAKEEADKKSREIITNAIQRCAADHVSETTVHVVALPNDEMKGRIIGREGRNIRTLETLTGVDLIIDDTPEAVILSSFDPIRREVARIALEKLIVDGRIHPARIEEMVERAIKDVENDIKEEGEQATFETGVHGLHPEIIKLLGRLKYRTSYGQNVLKHSIEVSYLAGLMASELGLDVNLARRAGLLHDIGKGVDQEYEGPHAVIGGELAKKYHESPAVVNAIAAHHGDTEMQTLEAVLVQAADAISAARPGARRETLEAYIKRLEKLEEIATSYEGVEKSYAIQAGREIRIMVKPDQVDDAGAIEMARNIVKKIEEQLEYPGQIKINVIRETRAVDYAK.

The chain crosses the membrane as a helical span at residues 3–23; the sequence is VGILIGIIILGVVGFIQYTLI. In terms of domain architecture, KH spans 201–286; sequence TVHVVALPND…EMVERAIKDV (86 aa). The region spanning 327–420 is the HD domain; it reads VLKHSIEVSY…VQAADAISAA (94 aa).

The protein belongs to the RNase Y family.

The protein localises to the cell membrane. Endoribonuclease that initiates mRNA decay. This chain is Ribonuclease Y, found in Clostridium perfringens (strain SM101 / Type A).